The following is a 157-amino-acid chain: Succinate dehydrogenase assembly factor 2-A, mitochondrial (157 aa).

The N-terminal 21 residues, 1–21 (MLRQVLSSTSVRRLLVSPTRC), are a transit peptide targeting the mitochondrion.

It belongs to the SDHAF2 family. In terms of assembly, interacts with the flavoprotein subunit within the SDH catalytic dimer.

The protein resides in the mitochondrion matrix. Plays an essential role in the assembly of succinate dehydrogenase (SDH), an enzyme complex (also referred to as respiratory complex II) that is a component of both the tricarboxylic acid (TCA) cycle and the mitochondrial electron transport chain, and which couples the oxidation of succinate to fumarate with the reduction of ubiquinone (coenzyme Q) to ubiquinol. Required for flavinylation (covalent attachment of FAD) of the flavoprotein subunit of the SDH catalytic dimer. The chain is Succinate dehydrogenase assembly factor 2-A, mitochondrial from Drosophila mojavensis (Fruit fly).